A 445-amino-acid chain; its full sequence is Argininosuccinate synthase (445 aa).

ATP-binding positions include 17–25 and Ala-43; that span reads AFSGGLDTS. Tyr-99 is a binding site for L-citrulline. 2 residues coordinate ATP: Gly-129 and Thr-131. L-aspartate is bound by residues Thr-131, Asn-135, and Asp-136. Residue Asn-135 coordinates L-citrulline. An ATP-binding site is contributed by Asp-136. Positions 139 and 192 each coordinate L-citrulline. ATP is bound at residue Asp-194. Thr-201, Glu-203, and Glu-280 together coordinate L-citrulline.

The protein belongs to the argininosuccinate synthase family. Type 2 subfamily. As to quaternary structure, homotetramer.

The protein resides in the cytoplasm. The catalysed reaction is L-citrulline + L-aspartate + ATP = 2-(N(omega)-L-arginino)succinate + AMP + diphosphate + H(+). Its pathway is amino-acid biosynthesis; L-arginine biosynthesis; L-arginine from L-ornithine and carbamoyl phosphate: step 2/3. The chain is Argininosuccinate synthase (argG) from Burkholderia multivorans (strain ATCC 17616 / 249).